We begin with the raw amino-acid sequence, 612 residues long: GPI mannosyltransferase 3 (612 aa).

2 helical membrane-spanning segments follow: residues Leu92–Met112 and Val145–Ile165. The N-linked (GlcNAc...) asparagine glycan is linked to Asn188. A run of 3 helical transmembrane segments spans residues Ile192–Ile212, Arg254–Leu274, and Ile288–Asn308. An N-linked (GlcNAc...) asparagine glycan is attached at Asn321. Residues Leu339–Phe359 traverse the membrane as a helical segment. A glycan (N-linked (GlcNAc...) asparagine) is linked at Asn361. The next 3 membrane-spanning stretches (helical) occupy residues Phe371–Leu391, Phe398–Ala418, and Glu429–Gln449. Residues Asn508, Asn526, and Asn550 are each glycosylated (N-linked (GlcNAc...) asparagine).

The protein belongs to the glycosyltransferase 22 family. PIGB subfamily.

It is found in the endoplasmic reticulum membrane. Its pathway is glycolipid biosynthesis; glycosylphosphatidylinositol-anchor biosynthesis. Its function is as follows. Mannosyltransferase involved in glycosylphosphatidylinositol-anchor biosynthesis. Transfers the third mannose to Man2-GlcN-acyl-PI during GPI precursor assembly. The chain is GPI mannosyltransferase 3 (GPI10) from Candida glabrata (strain ATCC 2001 / BCRC 20586 / JCM 3761 / NBRC 0622 / NRRL Y-65 / CBS 138) (Yeast).